Here is a 299-residue protein sequence, read N- to C-terminus: CCR4-NOT transcription complex subunit 9 (299 aa).

At Met1 the chain carries N-acetylmethionine.

It belongs to the CNOT9 family. In terms of assembly, homodimer. Component of the CCR4-NOT complex; distinct complexes seem to exist that differ in the participation of probably mutually exclusive catalytic subunits. Interacts with MYB, ATF2, RARA, RARB, RARG, RXRA, RXRB and RXRG. Identified in a complex with ATF2 bound to target DNA. Interacts with NANOS2. Directly interacts with ZNF335. In terms of tissue distribution, detected in spleen, thymus, prostate, testis, ovary and intestine.

It localises to the nucleus. It is found in the cytoplasm. The protein localises to the P-body. Its function is as follows. Component of the CCR4-NOT complex which is one of the major cellular mRNA deadenylases and is linked to various cellular processes including bulk mRNA degradation, miRNA-mediated repression, translational repression during translational initiation and general transcription regulation. Additional complex functions may be a consequence of its influence on mRNA expression. Involved in down-regulation of MYB- and JUN-dependent transcription. May play a role in cell differentiation. Can bind oligonucleotides, such as poly-G, poly-C or poly-T (in vitro), but the physiological relevance of this is not certain. Does not bind poly-A. Enhances ligand-dependent transcriptional activity of nuclear hormone receptors, including RARA, expect ESR1-mediated transcription that is not only slightly increased, if at all. The protein is CCR4-NOT transcription complex subunit 9 of Homo sapiens (Human).